The following is a 165-amino-acid chain: Shikimate kinase (165 aa).

ATP is bound at residue 11–16; it reads GAGKTT. A Mg(2+)-binding site is contributed by threonine 15. Residues aspartate 33, arginine 57, and glycine 78 each contribute to the substrate site. Arginine 116 is a binding site for ATP. Arginine 134 is a binding site for substrate.

Belongs to the shikimate kinase family. In terms of assembly, monomer. The cofactor is Mg(2+).

The protein resides in the cytoplasm. The enzyme catalyses shikimate + ATP = 3-phosphoshikimate + ADP + H(+). Its pathway is metabolic intermediate biosynthesis; chorismate biosynthesis; chorismate from D-erythrose 4-phosphate and phosphoenolpyruvate: step 5/7. Functionally, catalyzes the specific phosphorylation of the 3-hydroxyl group of shikimic acid using ATP as a cosubstrate. This Bacillus cereus (strain AH187) protein is Shikimate kinase.